Here is a 422-residue protein sequence, read N- to C-terminus: Gamma-glutamyl phosphate reductase (422 aa).

Belongs to the gamma-glutamyl phosphate reductase family.

It localises to the cytoplasm. The catalysed reaction is L-glutamate 5-semialdehyde + phosphate + NADP(+) = L-glutamyl 5-phosphate + NADPH + H(+). Its pathway is amino-acid biosynthesis; L-proline biosynthesis; L-glutamate 5-semialdehyde from L-glutamate: step 2/2. Catalyzes the NADPH-dependent reduction of L-glutamate 5-phosphate into L-glutamate 5-semialdehyde and phosphate. The product spontaneously undergoes cyclization to form 1-pyrroline-5-carboxylate. The sequence is that of Gamma-glutamyl phosphate reductase from Nitrosomonas eutropha (strain DSM 101675 / C91 / Nm57).